We begin with the raw amino-acid sequence, 432 residues long: Amino-acid acetyltransferase (432 aa).

The N-acetyltransferase domain maps to 286–425; that stretch reads ELVREAAIED…ASLYNYQRNS (140 aa).

The protein belongs to the acetyltransferase family. ArgA subfamily.

It is found in the cytoplasm. It catalyses the reaction L-glutamate + acetyl-CoA = N-acetyl-L-glutamate + CoA + H(+). The protein operates within amino-acid biosynthesis; L-arginine biosynthesis; N(2)-acetyl-L-ornithine from L-glutamate: step 1/4. In Pseudomonas fluorescens (strain Pf0-1), this protein is Amino-acid acetyltransferase.